The primary structure comprises 166 residues: Small ribosomal subunit protein uS5 (166 aa).

The S5 DRBM domain occupies 11-74; it reads LQEKLIAVNR…EKARRNMMNV (64 aa).

Belongs to the universal ribosomal protein uS5 family. Part of the 30S ribosomal subunit. Contacts proteins S4 and S8.

With S4 and S12 plays an important role in translational accuracy. Its function is as follows. Located at the back of the 30S subunit body where it stabilizes the conformation of the head with respect to the body. The sequence is that of Small ribosomal subunit protein uS5 from Sodalis glossinidius (strain morsitans).